Here is a 310-residue protein sequence, read N- to C-terminus: Vomeronasal type-1 receptor 93 (310 aa).

Residues 1 to 20 (MNKDNTLHVDTIMKITMFSE) are Extracellular-facing. The chain crosses the membrane as a helical span at residues 21–41 (VSVGILANSILFFAHLCMLLG). At 42 to 59 (ENKPKPIHLYIASLSLTQ) the chain is on the cytoplasmic side. A helical transmembrane segment spans residues 60–80 (LMLLITMGLIAADMFISQGIW). The Extracellular portion of the chain corresponds to 81 to 93 (DSTSCQSLIYLHR). An intrachain disulfide couples Cys85 to Cys172. The chain crosses the membrane as a helical span at residues 94-114 (LSRGFTLSAACLLNVFWMITL). The Cytoplasmic segment spans residues 115 to 134 (SSKKSRLTKFKHNSPHHISG). The helical transmembrane segment at 135–155 (AFLLLCVLYMCFSSHLILSII) threads the bilayer. Residues 156-193 (ATPNLTSDNFMYVTKSCSFLPMCYSRTSMFSTTIAVRE) lie on the Extracellular side of the membrane. N-linked (GlcNAc...) asparagine glycosylation occurs at Asn159. Residues 194–214 (AFFIGLMALSSGYLVAFLWRH) form a helical membrane-spanning segment. Residues 215–238 (RKQAQHLHSTGLSSKASPEQRATE) are Cytoplasmic-facing. A helical membrane pass occupies residues 239-259 (TILLLMSFFVVLYILENVVFY). Topologically, residues 260–269 (SRMKFKDGST) are extracellular. Residues 270–290 (FYCVQIIVSHSYATVSSFVFI) form a helical membrane-spanning segment. Over 291–310 (FTEKRMTKILRSVCTRIINI) the chain is Cytoplasmic.

Belongs to the G-protein coupled receptor 1 family. As to expression, expressed in 1-4% of neurons of the vomeronasal organ. Only one pheromone receptor gene may be expressed in a particular neuron. Not expressed in the main olfactory epithelium.

The protein resides in the cell membrane. Its function is as follows. Putative pheromone receptor implicated in the regulation of social as well as reproductive behavior. The polypeptide is Vomeronasal type-1 receptor 93 (Vom1r93) (Rattus norvegicus (Rat)).